The following is a 341-amino-acid chain: Farnesyl pyrophosphate synthase (341 aa).

The isopentenyl diphosphate site is built by Lys48, Arg51, and Gln86. Residues Asp93 and Asp97 each coordinate Mg(2+). Arg102 is a dimethylallyl diphosphate binding site. Arg103 lines the isopentenyl diphosphate pocket. 4 residues coordinate dimethylallyl diphosphate: Lys190, Thr191, Gln229, and Lys246.

The protein belongs to the FPP/GGPP synthase family. Mg(2+) serves as cofactor.

The protein resides in the cytoplasm. It carries out the reaction isopentenyl diphosphate + dimethylallyl diphosphate = (2E)-geranyl diphosphate + diphosphate. The catalysed reaction is isopentenyl diphosphate + (2E)-geranyl diphosphate = (2E,6E)-farnesyl diphosphate + diphosphate. It functions in the pathway isoprenoid biosynthesis; farnesyl diphosphate biosynthesis; farnesyl diphosphate from geranyl diphosphate and isopentenyl diphosphate: step 1/1. Its pathway is isoprenoid biosynthesis; geranyl diphosphate biosynthesis; geranyl diphosphate from dimethylallyl diphosphate and isopentenyl diphosphate: step 1/1. Functionally, catalyzes the sequential condensation of isopentenyl pyrophosphate with the allylic pyrophosphates, dimethylallyl pyrophosphate, and then with the resultant geranylpyrophosphate to the ultimate product farnesyl pyrophosphate. The polypeptide is Farnesyl pyrophosphate synthase (FPS1) (Helianthus annuus (Common sunflower)).